The primary structure comprises 312 residues: Ribosomal protein L11 methyltransferase (312 aa).

Residues threonine 162, glycine 183, aspartate 205, and asparagine 248 each coordinate S-adenosyl-L-methionine.

It belongs to the methyltransferase superfamily. PrmA family.

Its subcellular location is the cytoplasm. It catalyses the reaction L-lysyl-[protein] + 3 S-adenosyl-L-methionine = N(6),N(6),N(6)-trimethyl-L-lysyl-[protein] + 3 S-adenosyl-L-homocysteine + 3 H(+). Its function is as follows. Methylates ribosomal protein L11. In Anoxybacillus flavithermus (strain DSM 21510 / WK1), this protein is Ribosomal protein L11 methyltransferase.